Reading from the N-terminus, the 101-residue chain is Urease subunit beta (101 aa).

This sequence belongs to the urease beta subunit family. In terms of assembly, heterotrimer of UreA (gamma), UreB (beta) and UreC (alpha) subunits. Three heterotrimers associate to form the active enzyme.

It localises to the cytoplasm. It catalyses the reaction urea + 2 H2O + H(+) = hydrogencarbonate + 2 NH4(+). It participates in nitrogen metabolism; urea degradation; CO(2) and NH(3) from urea (urease route): step 1/1. This is Urease subunit beta from Paraburkholderia phytofirmans (strain DSM 17436 / LMG 22146 / PsJN) (Burkholderia phytofirmans).